The primary structure comprises 376 residues: 23S rRNA (uracil(747)-C(5))-methyltransferase RlmC (376 aa).

[4Fe-4S] cluster is bound by residues C3, C11, C14, and C87. Residues Q212, F241, E262, and N307 each coordinate S-adenosyl-L-methionine. C334 serves as the catalytic Nucleophile.

This sequence belongs to the class I-like SAM-binding methyltransferase superfamily. RNA M5U methyltransferase family. RlmC subfamily.

It carries out the reaction uridine(747) in 23S rRNA + S-adenosyl-L-methionine = 5-methyluridine(747) in 23S rRNA + S-adenosyl-L-homocysteine + H(+). Catalyzes the formation of 5-methyl-uridine at position 747 (m5U747) in 23S rRNA. This chain is 23S rRNA (uracil(747)-C(5))-methyltransferase RlmC, found in Salmonella typhimurium (strain LT2 / SGSC1412 / ATCC 700720).